An 87-amino-acid chain; its full sequence is UPF0250 protein YPK_3025 (87 aa).

The protein belongs to the UPF0250 family.

The chain is UPF0250 protein YPK_3025 from Yersinia pseudotuberculosis serotype O:3 (strain YPIII).